The sequence spans 500 residues: Glutathione reductase (500 aa).

FAD is bound by residues serine 12 and glycine 13. Serine 12 contacts glutathione. Glutathione is bound at residue arginine 19. FAD contacts are provided by glutamate 32, threonine 39, cysteine 40, and lysine 48. Cysteines 40 and 45 form a disulfide. Tyrosine 95 is a glutathione binding site. Alanine 111 serves as a coordination point for FAD. Positions 187, 190, 207, 213, and 272 each coordinate NADP(+). Aspartate 312 and threonine 354 together coordinate FAD. Arginine 362 is a glutathione binding site. Residue valine 384 participates in NADP(+) binding. Histidine 485 is a binding site for FAD. The active-site Proton acceptor is the histidine 485.

The protein belongs to the class-I pyridine nucleotide-disulfide oxidoreductase family. In terms of assembly, homodimer. Requires FAD as cofactor.

It is found in the cytoplasm. The enzyme catalyses 2 glutathione + NADP(+) = glutathione disulfide + NADPH + H(+). Its function is as follows. Catalyzes the reduction of glutathione disulfide (GSSG) to reduced glutathione (GSH). Constitutes the major mechanism to maintain a high GSH:GSSG ratio in the cytosol. This chain is Glutathione reductase, found in Plasmodium falciparum (isolate K1 / Thailand).